Here is a 184-residue protein sequence, read N- to C-terminus: MTSQVAAAEVAQPYAQALLSIAQSKNLTEEFGEDARTFLGLLRADKQLHNFFSNPFIQAENKKALIKQILGEGSNPYLRNFLLILVDKRRIAFLESIFQQYLALLRQLNQTVLAEVISAVPLTEAQQQAIIQKVIAISNARQVELETKVDSELIGGVIIKVGSQVIDASIRGQLRRLSLRLTNS.

It belongs to the ATPase delta chain family. F-type ATPases have 2 components, F(1) - the catalytic core - and F(0) - the membrane proton channel. F(1) has five subunits: alpha(3), beta(3), gamma(1), delta(1), epsilon(1). CF(0) has four main subunits: a(1), b(1), b'(1) and c(10-14). The alpha and beta chains form an alternating ring which encloses part of the gamma chain. F(1) is attached to F(0) by a central stalk formed by the gamma and epsilon chains, while a peripheral stalk is formed by the delta, b and b' chains.

The protein localises to the cellular thylakoid membrane. F(1)F(0) ATP synthase produces ATP from ADP in the presence of a proton or sodium gradient. F-type ATPases consist of two structural domains, F(1) containing the extramembraneous catalytic core and F(0) containing the membrane proton channel, linked together by a central stalk and a peripheral stalk. During catalysis, ATP synthesis in the catalytic domain of F(1) is coupled via a rotary mechanism of the central stalk subunits to proton translocation. In terms of biological role, this protein is part of the stalk that links CF(0) to CF(1). It either transmits conformational changes from CF(0) to CF(1) or is implicated in proton conduction. In Nostoc punctiforme (strain ATCC 29133 / PCC 73102), this protein is ATP synthase subunit delta.